A 137-amino-acid chain; its full sequence is NADH dehydrogenase [ubiquinone] 1 beta subcomplex subunit 7 (137 aa).

Glycine 2 carries N-myristoyl glycine lipidation. In terms of domain architecture, CHCH spans 56-98 (RDYCAHYLIRLLKCKRDSFPNFLACKQERHDWDYCEHRDYVMR). The Cx9C motif 1 signature appears at 59-69 (CAHYLIRLLKC). 2 disulfide bridges follow: cysteine 59-cysteine 90 and cysteine 69-cysteine 80. Position 73 is a phosphoserine (serine 73). The Cx9C motif 2 signature appears at 80 to 90 (CKQERHDWDYC). The segment at 113 to 137 (KRREKKAAELAKGQGPGEVDPKVAL) is disordered.

The protein belongs to the complex I NDUFB7 subunit family. As to quaternary structure, complex I is composed of 45 different subunits.

Its subcellular location is the mitochondrion inner membrane. It is found in the mitochondrion intermembrane space. Functionally, accessory subunit of the mitochondrial membrane respiratory chain NADH dehydrogenase (Complex I), that is believed not to be involved in catalysis. Complex I functions in the transfer of electrons from NADH to the respiratory chain. The immediate electron acceptor for the enzyme is believed to be ubiquinone. The chain is NADH dehydrogenase [ubiquinone] 1 beta subcomplex subunit 7 (NDUFB7) from Gorilla gorilla gorilla (Western lowland gorilla).